A 391-amino-acid chain; its full sequence is MEHTWRWFGPNDETTLTDIRQTGATGVVTALHEIPNGEVWPVEAIKARKAMIEAHTLRWSVVESVPVHEDIKKRTGNYQEYIQNYKQTLLNLAECGIDTVCYNFMPVLDWTRTDLDYELPDGSRALRFDQTAFAAFELYILERKGAESEYSDEEKAQAKIFLENLKAEDKDRLVANIIAGLPGSEESYTIEQFREKLDEYAGIDKDKLREHLKLFLEEIVPAAEQGGLRLAIHPDDPPRPILGLPRVVSVKDDIEWLLGAVPSPVNGITLCTGSYGVRADNDLVDMVQRFGSNIFFTHLRSTKREEVAGSFHEASHLGGDVDMVGVVRALLVEEKKRNDNNAPSLIPMRPDHGHQILNDLEKNSKPGYSKLGRMKGLAEVRGLELGLKSTL.

It belongs to the mannonate dehydratase family. The cofactor is Fe(2+). It depends on Mn(2+) as a cofactor.

It catalyses the reaction D-mannonate = 2-dehydro-3-deoxy-D-gluconate + H2O. It functions in the pathway carbohydrate metabolism; pentose and glucuronate interconversion. Catalyzes the dehydration of D-mannonate. The polypeptide is Mannonate dehydratase (Marinomonas sp. (strain MWYL1)).